Here is a 129-residue protein sequence, read N- to C-terminus: uncharacterized protein (129 aa).

A helical membrane pass occupies residues isoleucine 5–threonine 25.

Its subcellular location is the membrane. This is an uncharacterized protein from Mycoplasma pneumoniae (strain ATCC 29342 / M129 / Subtype 1) (Mycoplasmoides pneumoniae).